Here is a 453-residue protein sequence, read N- to C-terminus: Cysteine desulfurase, mitochondrial (453 aa).

The transit peptide at 1–34 directs the protein to the mitochondrion; the sequence is MASKVISATIRRTLTKPHGTFSRCRYLSTAAAAT. Residues 123 to 124, asparagine 203, glutamine 231, and 251 to 253 contribute to the pyridoxal 5'-phosphate site; these read AT and SAH. Lysine 254 bears the N6-(pyridoxal phosphate)lysine mark. Residue threonine 291 coordinates pyridoxal 5'-phosphate. Cysteine 377 acts as the Cysteine persulfide intermediate in catalysis. Residue cysteine 377 participates in [2Fe-2S] cluster binding.

Belongs to the class-V pyridoxal-phosphate-dependent aminotransferase family. NifS/IscS subfamily. As to quaternary structure, interacts with FH. Interacts with SUFE1. The cofactor is pyridoxal 5'-phosphate.

It localises to the mitochondrion. The catalysed reaction is (sulfur carrier)-H + L-cysteine = (sulfur carrier)-SH + L-alanine. Threefold increase in the catalytic activity in the presence of FH (frataxin). 30-fold increase in the catalytic activity in the presence of SUFE1. Catalyzes the removal of elemental sulfur from cysteine to produce alanine. Supplies the inorganic sulfur for iron-sulfur (Fe-S) clusters. This is Cysteine desulfurase, mitochondrial from Arabidopsis thaliana (Mouse-ear cress).